Reading from the N-terminus, the 253-residue chain is Flap endonuclease Xni (253 aa).

Residue aspartate 105 coordinates Mg(2+). Residues 162 to 251 (ERHQLLDYIA…HLKLSDLRVN (90 aa)) form the 5'-3' exonuclease domain. Residues leucine 172, proline 181, isoleucine 183, and isoleucine 186 each coordinate K(+). Positions 185–190 (GIGPKS) are interaction with DNA.

The protein belongs to the Xni family. It depends on Mg(2+) as a cofactor. K(+) is required as a cofactor.

Has flap endonuclease activity. During DNA replication, flap endonucleases cleave the 5'-overhanging flap structure that is generated by displacement synthesis when DNA polymerase encounters the 5'-end of a downstream Okazaki fragment. The chain is Flap endonuclease Xni from Shewanella amazonensis (strain ATCC BAA-1098 / SB2B).